The primary structure comprises 147 residues: MEKWNREEFEEVVVNISRVTKVVKGGRRFRFSALVVVGDKKGHVGYGIGKAKEVPDAIKKAIDNAFKNITTVNIKGTTIAHDIEHKYNASKILLKPASQGTGVIAGGAARPVLELAGIQDILTKSLGSNNPATLVRATIEALERIKG.

One can recognise an S5 DRBM domain in the interval 9–72 (FEEVVVNISR…DNAFKNITTV (64 aa)).

It belongs to the universal ribosomal protein uS5 family. In terms of assembly, part of the 30S ribosomal subunit. Contacts proteins S4 and S8.

In terms of biological role, with S4 and S12 plays an important role in translational accuracy. Functionally, located at the back of the 30S subunit body where it stabilizes the conformation of the head with respect to the body. This Nitratiruptor sp. (strain SB155-2) protein is Small ribosomal subunit protein uS5.